Reading from the N-terminus, the 125-residue chain is Histone H2A.v3 (125 aa).

This sequence belongs to the histone H2A family. The nucleosome is a histone octamer containing two molecules each of H2A, H2B, H3 and H4 assembled in one H3-H4 heterotetramer and two H2A-H2B heterodimers. The octamer wraps approximately 147 bp of DNA.

It is found in the nucleus. The protein resides in the chromosome. Its function is as follows. Core component of nucleosome which plays a central role in DNA double strand break (DSB) repair. Nucleosomes wrap and compact DNA into chromatin, limiting DNA accessibility to the cellular machineries which require DNA as a template. Histones thereby play a central role in transcription regulation, DNA repair, DNA replication and chromosomal stability. DNA accessibility is regulated via a complex set of post-translational modifications of histones, also called histone code, and nucleosome remodeling. The sequence is that of Histone H2A.v3 (H2Av3) from Dictyostelium discoideum (Social amoeba).